The primary structure comprises 408 residues: Serine/threonine transporter SstT (408 aa).

The next 9 helical transmembrane spans lie at 11-31 (LANGSLVLQILVGIIAGVSLA), 43-63 (FLGSLFVGALKAIAPILVFIL), 82-102 (IVVLYLFGTFAAALTAVLLSM), 141-161 (ALMTGNYIGILAWGVGLGLAL), 192-212 (IGIFGLVAATFAETGFAAIAG), 216-236 (LLAVLLGAMAIIALIVNPLIV), 290-310 (IPLGATINMGGAAITITVLTL), 316-336 (LGIQVDLLTALLLSVVAAISA), and 363-383 (VAMQVVAVGFIIGVIQDAAET).

This sequence belongs to the dicarboxylate/amino acid:cation symporter (DAACS) (TC 2.A.23) family.

The protein resides in the cell inner membrane. It carries out the reaction L-serine(in) + Na(+)(in) = L-serine(out) + Na(+)(out). The enzyme catalyses L-threonine(in) + Na(+)(in) = L-threonine(out) + Na(+)(out). Involved in the import of serine and threonine into the cell, with the concomitant import of sodium (symport system). This is Serine/threonine transporter SstT from Shewanella sp. (strain MR-4).